We begin with the raw amino-acid sequence, 280 residues long: Acyl-[acyl-carrier-protein]--UDP-N-acetylglucosamine O-acyltransferase (280 aa).

The protein belongs to the transferase hexapeptide repeat family. LpxA subfamily. In terms of assembly, homotrimer.

Its subcellular location is the cytoplasm. The catalysed reaction is a (3R)-hydroxyacyl-[ACP] + UDP-N-acetyl-alpha-D-glucosamine = a UDP-3-O-[(3R)-3-hydroxyacyl]-N-acetyl-alpha-D-glucosamine + holo-[ACP]. It functions in the pathway glycolipid biosynthesis; lipid IV(A) biosynthesis; lipid IV(A) from (3R)-3-hydroxytetradecanoyl-[acyl-carrier-protein] and UDP-N-acetyl-alpha-D-glucosamine: step 1/6. In terms of biological role, involved in the biosynthesis of lipid A, a phosphorylated glycolipid that anchors the lipopolysaccharide to the outer membrane of the cell. This is Acyl-[acyl-carrier-protein]--UDP-N-acetylglucosamine O-acyltransferase from Chlamydia muridarum (strain MoPn / Nigg).